Here is a 600-residue protein sequence, read N- to C-terminus: Aspartate--tRNA(Asp/Asn) ligase (600 aa).

Glutamate 174 serves as a coordination point for L-aspartate. An aspartate region spans residues 198 to 201; sequence QLFK. Arginine 220 contacts L-aspartate. ATP is bound by residues 220-222 and glutamine 229; that span reads RDE. Histidine 457 contacts L-aspartate. Glutamate 491 serves as a coordination point for ATP. Residue arginine 498 participates in L-aspartate binding. 543–546 serves as a coordination point for ATP; it reads GLDR.

It belongs to the class-II aminoacyl-tRNA synthetase family. Type 1 subfamily. In terms of assembly, homodimer.

It is found in the cytoplasm. The enzyme catalyses tRNA(Asx) + L-aspartate + ATP = L-aspartyl-tRNA(Asx) + AMP + diphosphate. Functionally, aspartyl-tRNA synthetase with relaxed tRNA specificity since it is able to aspartylate not only its cognate tRNA(Asp) but also tRNA(Asn). Reaction proceeds in two steps: L-aspartate is first activated by ATP to form Asp-AMP and then transferred to the acceptor end of tRNA(Asp/Asn). This Burkholderia pseudomallei (strain 668) protein is Aspartate--tRNA(Asp/Asn) ligase.